Reading from the N-terminus, the 292-residue chain is Hypersensitive-induced response protein 4 (292 aa).

The N-myristoyl glycine moiety is linked to residue Gly2.

As to quaternary structure, self-interacts and forms heteromers. Interacts with NB-LRR class of R proteins before R proteins (e.g. RPS2 or RPM1) are activated by the effectors.

It localises to the cell membrane. This chain is Hypersensitive-induced response protein 4 (HIR4), found in Arabidopsis thaliana (Mouse-ear cress).